Reading from the N-terminus, the 252-residue chain is 5-oxoprolinase subunit A (252 aa).

The protein belongs to the LamB/PxpA family. Forms a complex composed of PxpA, PxpB and PxpC.

It catalyses the reaction 5-oxo-L-proline + ATP + 2 H2O = L-glutamate + ADP + phosphate + H(+). Its function is as follows. Catalyzes the cleavage of 5-oxoproline to form L-glutamate coupled to the hydrolysis of ATP to ADP and inorganic phosphate. The polypeptide is 5-oxoprolinase subunit A (Staphylococcus saprophyticus subsp. saprophyticus (strain ATCC 15305 / DSM 20229 / NCIMB 8711 / NCTC 7292 / S-41)).